Consider the following 245-residue polypeptide: Ribosomal RNA small subunit methyltransferase G (245 aa).

Residues Gly-90, Leu-95, 140-141 (AE), and Arg-158 contribute to the S-adenosyl-L-methionine site.

Belongs to the methyltransferase superfamily. RNA methyltransferase RsmG family.

The protein localises to the cytoplasm. Functionally, specifically methylates the N7 position of guanine in position 518 of 16S rRNA. In Mycobacterium leprae (strain TN), this protein is Ribosomal RNA small subunit methyltransferase G.